The primary structure comprises 944 residues: Trehalose monomycolate exporter MmpL3 (944 aa).

Residues 1-13 (MFAWWGRTVYRYR) are Cytoplasmic-facing. The helical transmembrane segment at 14–34 (FIVIGVMVALCLGGGVFGLSL) threads the bilayer. At 35 to 185 (GKHVTQSGFY…TIATDQRRME (151 aa)) the chain is on the periplasmic side. Residue 40–44 (QSGFY) coordinates a 1,2-diacylglycero-3-phosphoethanolamine. Residues 186-206 (VLALPLVAVVLFFVFGGVIAA) form a helical membrane-spanning segment. Residues 207–209 (GLP) are Cytoplasmic-facing. A helical transmembrane segment spans residues 210–230 (VMVGGLCIAGALGIMRFLAIF). Residues 231-235 (GPVHY) are Periplasmic-facing. The chain crosses the membrane as a helical span at residues 236 to 256 (FAQPVVSLIGLGIAIDYGLFI). Topologically, residues 257-286 (VSRFREEIAEGYDTETAVRRTVITAGRTVT) are cytoplasmic. Residues 287-307 (FSAVLIVASAIGLLLFPQGFL) traverse the membrane as a helical segment. At 308 to 314 (KSLTYAT) the chain is on the periplasmic side. Residues 315 to 335 (IASVMLSAILSITVLPACLGI) traverse the membrane as a helical segment. The Cytoplasmic segment spans residues 336-396 (LGKHVDALGV…KLVNRVMKRP (61 aa)). A helical transmembrane segment spans residues 397 to 417 (VLFAAPIVIIMILLIIPVGKL). Residues 418–562 (SLGGISEKYL…HGLFAKMPLM (145 aa)) are Periplasmic-facing. Residues 563-583 (VVILLTTTIVLMFLAFGSVVL) traverse the membrane as a helical segment. At 584-586 (PIK) the chain is on the cytoplasmic side. A helical transmembrane segment spans residues 587–607 (ATLMSALTLGSTMGILTWIFV). At 608 to 616 (DGHFSKWLN) the chain is on the periplasmic side. Residues 617–637 (FTPTPLTAPVIGLIIALVFGL) form a helical membrane-spanning segment. The Cytoplasmic segment spans residues 638–672 (STDYEVFLVSRMVEARERGMSTQEAIRIGTAATGR). Residues 673-693 (IITAAALIVAVVAGAFVFSDL) form a helical membrane-spanning segment. The Periplasmic portion of the chain corresponds to 694–698 (VMMKY). Residues 699-719 (LAFGLMAALLLDATVVRMFLV) form a helical membrane-spanning segment. The Cytoplasmic portion of the chain corresponds to 720–944 (PSVMKLLGDD…QDLLRREGRL (225 aa)). Positions 778-944 (AAGDPRPPHD…QDLLRREGRL (167 aa)) are disordered. Over residues 791-828 (PLAESPRPARSSPASSPELTPALEATAAPAAPSGASTT) the composition is skewed to low complexity. Residues 829–839 (RMQIGSSTEPP) are compositionally biased toward polar residues. Over residues 855–866 (STPPPTPTPPSA) the composition is skewed to pro residues.

This sequence belongs to the resistance-nodulation-cell division (RND) (TC 2.A.6) family. MmpL subfamily. In terms of assembly, monomer. Interacts with TtfA (via N-terminus); active trehalose monomycolate (TMM) biosynthesis is not required for the complex formation.

Its subcellular location is the cell inner membrane. It is found in the cell septum. The protein resides in the cell tip. Inhibited by the antitubercular drug SQ109. Also inhibited by several other compounds such as the pyrrole derivative BM212, the adamantyl urea derivative AU1235, the benzimidazole C215, indoleamides, tetrahydropyrazolo[1,5-a]pyrimidine-3-carboxamide (THPP) and N-benzyl-6',7'-dihydrospiro[piperidine-4,4'-thieno[3,2-c]pyran] (Spiro) analogs. Inhibitory effects of these compounds, including SQ109, are most likely due to their ability to dissipate the transmembrane electrochemical proton gradient. Its function is as follows. Transports trehalose monomycolate (TMM) to the cell wall. Flips TMM across the inner membrane. Membrane potential is not required for this function. Transports probably phosphatidylethanolamine (PE) as well. Binds specifically both TMM and PE, but not trehalose dimycolate (TDM). Also binds diacylglycerol (DAG) and other phospholipids, including phosphatidylglycerol (PG), phosphatidylinositol (PI), and cardiolipin (CDL). Contributes to membrane potential, cell wall composition, antibiotic susceptibility and fitness. Could also be part of a heme-iron acquisition system. In terms of biological role, is the target of the antitubercular drug SQ109. The sequence is that of Trehalose monomycolate exporter MmpL3 (mmpL3) from Mycobacterium tuberculosis (strain ATCC 25618 / H37Rv).